We begin with the raw amino-acid sequence, 334 residues long: ADP-L-glycero-D-manno-heptose-6-epimerase (334 aa).

Residues 11–12 (FI), 32–33 (DN), Lys39, Lys54, 77–81 (QGACS), and Asn94 contribute to the NADP(+) site. The active-site Proton acceptor is Tyr141. Lys145 is a binding site for NADP(+). Asn171 serves as a coordination point for substrate. NADP(+) contacts are provided by Val172 and Lys180. Residue Lys180 is the Proton acceptor of the active site. Residues Arg182, His189, 203–206 (FGSN), Arg216, and Tyr295 each bind substrate.

It belongs to the NAD(P)-dependent epimerase/dehydratase family. HldD subfamily. In terms of assembly, homopentamer. It depends on NADP(+) as a cofactor.

It catalyses the reaction ADP-D-glycero-beta-D-manno-heptose = ADP-L-glycero-beta-D-manno-heptose. It functions in the pathway nucleotide-sugar biosynthesis; ADP-L-glycero-beta-D-manno-heptose biosynthesis; ADP-L-glycero-beta-D-manno-heptose from D-glycero-beta-D-manno-heptose 7-phosphate: step 4/4. Its pathway is bacterial outer membrane biogenesis; LOS core biosynthesis. Catalyzes the interconversion between ADP-D-glycero-beta-D-manno-heptose and ADP-L-glycero-beta-D-manno-heptose via an epimerization at carbon 6 of the heptose. This chain is ADP-L-glycero-D-manno-heptose-6-epimerase, found in Neisseria meningitidis serogroup B (strain ATCC BAA-335 / MC58).